We begin with the raw amino-acid sequence, 118 residues long: NLIQFSQLIQCANKGKRPTLHYMDYGCYCGPGGSGTPVDDLDRCCKTNDDCYGQAEKKGCSPLSTNYNFDCFPGGPQCGKGTTCQRFVCDCDLKAALCFAKSPYNNKNFNIDTKKRCK.

Disulfide bonds link Cys11-Cys71, Cys27-Cys117, Cys29-Cys45, Cys44-Cys98, Cys51-Cys91, Cys60-Cys84, and Cys78-Cys89. Residues 106–118 form an important for membrane-damaging activities in eukaryotes and bacteria; heparin-binding region; the sequence is NKNFNIDTKKRCK.

Belongs to the phospholipase A2 family. Group I subfamily. D49 sub-subfamily. In terms of tissue distribution, expressed by the venom gland.

The protein localises to the secreted. In Laticauda colubrina (Yellow-lipped sea krait), this protein is Basic phospholipase A2 homolog 1.